Here is a 70-residue protein sequence, read N- to C-terminus: DNA-directed RNA polymerase subunit omega (70 aa).

Belongs to the RNA polymerase subunit omega family. In terms of assembly, the RNAP catalytic core consists of 2 alpha, 1 beta, 1 beta' and 1 omega subunit. When a sigma factor is associated with the core the holoenzyme is formed, which can initiate transcription.

It catalyses the reaction RNA(n) + a ribonucleoside 5'-triphosphate = RNA(n+1) + diphosphate. In terms of biological role, promotes RNA polymerase assembly. Latches the N- and C-terminal regions of the beta' subunit thereby facilitating its interaction with the beta and alpha subunits. The polypeptide is DNA-directed RNA polymerase subunit omega (Staphylococcus epidermidis (strain ATCC 35984 / DSM 28319 / BCRC 17069 / CCUG 31568 / BM 3577 / RP62A)).